Consider the following 418-residue polypeptide: MNLEHMGKAAQEAAFELATVATAQKNQALAIIADELEANKDAILAANAKDINAARESGMTDALIDRLLLNEERLTGIANDVRNVISLNDPVGAELDSRVLENGMRLSRRRVPLGVVGVIYEARPNVTIDIAALCLKTGNASILRGGRETFHSNVELVKVIQVALKKADLPAASVQYIEKPDRELVSQLLRLDQYVDMIIPRGGAGLHKMCKENSTIPVIIGGFGISHIYVDHSADISRSIDVVENAKAQRPSACNALDTLLVSEKVAETFLPRLAERLNKSNVEFVADDAAYSFLEGKAATLRHAADGDFDTEWLSFTLGVKVVADVAEAIAHMRKHNASHSDAILTNDIQSAERFVNAAGSAAVYVNASTRFTDGAQFGLGAEVAVSTQKLHARGPMGLEELTSYKWVGQADYLVRP.

This sequence belongs to the gamma-glutamyl phosphate reductase family.

The protein resides in the cytoplasm. The catalysed reaction is L-glutamate 5-semialdehyde + phosphate + NADP(+) = L-glutamyl 5-phosphate + NADPH + H(+). Its pathway is amino-acid biosynthesis; L-proline biosynthesis; L-glutamate 5-semialdehyde from L-glutamate: step 2/2. Functionally, catalyzes the NADPH-dependent reduction of L-glutamate 5-phosphate into L-glutamate 5-semialdehyde and phosphate. The product spontaneously undergoes cyclization to form 1-pyrroline-5-carboxylate. The sequence is that of Gamma-glutamyl phosphate reductase from Photobacterium profundum (strain SS9).